The sequence spans 622 residues: Phosphatidylinositol 4-kinase gamma 6 (622 aa).

The Ubiquitin-like; degenerate domain maps to 38–95; sequence RRVFVQTDTGCVLGVELDRNDNVHTVKKRLQIAFNFPTEESSLTFGDMVLKNDLSAVR. Residues 158–459 enclose the PI3K/PI4K catalytic domain; the sequence is GVEPIPVNGG…LTTEQDVLSP (302 aa). A G-loop region spans residues 164-170; that stretch reads VNGGLGG. Residues 165-171, lysine 186, and 277-280 contribute to the ATP site; these read NGGLGGA and QKFV. Residues 310-318 form a catalytic loop region; sequence LNTDRHGGN. Residues 339–365 are activation loop; it reads PIDHGLCLPETLEDPYFEWIHWPQASI. Position 341 (aspartate 341) interacts with ATP. Serine 565 carries the post-translational modification Phosphoserine.

Belongs to the PI3/PI4-kinase family. Type II PI4K subfamily.

The enzyme catalyses a 1,2-diacyl-sn-glycero-3-phospho-(1D-myo-inositol) + ATP = a 1,2-diacyl-sn-glycero-3-phospho-(1D-myo-inositol 4-phosphate) + ADP + H(+). Functionally, the phosphorylation of phosphatidylinositol (PI) to PI4P is the first committed step in the generation of phosphatidylinositol 4,5-bisphosphate (PIP2), a precursor of the second messenger inositol 1,4,5-trisphosphate (InsP3). In Arabidopsis thaliana (Mouse-ear cress), this protein is Phosphatidylinositol 4-kinase gamma 6 (PI4KG6).